Consider the following 150-residue polypeptide: Centrin-B (150 aa).

3 consecutive EF-hand domains span residues 12-46 (DQISEIKESFDMFKSDNGKLDNDQIKYAFKALGCE), 80-114 (DSMSTLEQAFKLFVKDGSGITFKDLKKVAINIGEE), and 115-150 (CSDSDLYDMIEFADTDGDGVINKSEFISLMTTKKVL). Ca(2+)-binding residues include D128, D130, D132, and E139.

It belongs to the centrin family.

The protein localises to the cytoplasm. The protein resides in the cytoskeleton. It is found in the microtubule organizing center. It localises to the centrosome. In terms of biological role, plays a fundamental role in microtubule-organizing center structure and function. The sequence is that of Centrin-B (cenB) from Dictyostelium discoideum (Social amoeba).